The primary structure comprises 374 residues: Transcription factor NF-E2 45 kDa subunit (374 aa).

Disordered stretches follow at residues Met1–Pro21 and Leu40–Pro61. The segment at Met1–Tyr83 is required for interaction with MAPK8. Residues Met1–Glu207 are transactivation domain. A compositionally biased stretch (pro residues) spans Phe48 to Pro61. 2 consecutive short sequence motifs (PXY motif) follow at residues Pro61–Tyr65 and Pro79–Tyr83. The tract at residues Leu132 to Glu165 is disordered. Ser158 carries the phosphoserine; by MAPK8 modification. Ser171 is modified (phosphoserine; by PKA). Residues Glu207–Asp227 form a disordered region. One can recognise a bZIP domain in the interval Leu267–Leu330. The segment at Arg269–Lys288 is basic motif. Residues Ile292–Leu299 are leucine-zipper. A Glycyl lysine isopeptide (Lys-Gly) (interchain with G-Cter in SUMO); alternate cross-link involves residue Lys369. Residue Lys369 forms a Glycyl lysine isopeptide (Lys-Gly) (interchain with G-Cter in SUMO1); alternate linkage.

The protein belongs to the bZIP family. CNC subfamily. As to quaternary structure, homodimer; can bind DNA as a homodimer. Erythroid transcription activator nuclear factor erythroid-derived 2 (NF-E2), composed of a heterodimer of NFE2 and MAFK, possesses transactivation activity on beta-globin. Also forms high affinity heterodimer with MAFG; the interaction promotes erythropoiesis. Interacts (via the PXY motif 1) with ITCH (via the WW 1 domain); the interaction promotes 'Lys63'-linked ubiquitination of NFE2, translocates it to the cytoplasm and inhibits its transactivation activity. Interacts with KMT2D/MLL2; the interaction promotes transactivation of the beta-globin locus. Interacts with MAPK8 (phosphorylated form); the interaction leads to phosphorylation of NFE2 in undifferentiated cells. In terms of processing, phosphorylated on serine residues. In undifferentiated erythrocytes, phosphorylated by MAPK8 which then leads to ubiquitination and protein degradation. Sumoylated. Sumoylation is required for translocation to nuclear bodies PODs, anchoring to the gene loci, and transactivation of the beta-globin gene. Post-translationally, ubiquitinated mainly by 'Lys63'-linked ubiquitin. Polyubiquitination with 'Lys63'-linked ubiquitin by ITCH retains NFE2 in the cytoplasm preventing its transactivation activity. In undifferentiated erythrocyte, is ubiquitinated after MAPK8-mediatd phosphorylation leading to protein degradation.

The protein localises to the nucleus. It is found in the cytoplasm. Its function is as follows. Component of the NF-E2 complex essential for regulating erythroid and megakaryocytic maturation and differentiation. Binds to the hypersensitive site 2 (HS2) of the beta-globin control region (LCR). This subunit (NFE2) recognizes the TCAT/C sequence of the AP-1-like core palindrome present in a number of erythroid and megakaryocytic gene promoters. Requires MAFK or other small MAF proteins for binding to the NF-E2 motif. May play a role in all aspects of hemoglobin production from globin and heme synthesis to procurement of iron. The sequence is that of Transcription factor NF-E2 45 kDa subunit (NFE2) from Bos taurus (Bovine).